A 305-amino-acid chain; its full sequence is Glycine--tRNA ligase alpha subunit (305 aa).

This sequence belongs to the class-II aminoacyl-tRNA synthetase family. In terms of assembly, tetramer of two alpha and two beta subunits.

The protein localises to the cytoplasm. It catalyses the reaction tRNA(Gly) + glycine + ATP = glycyl-tRNA(Gly) + AMP + diphosphate. The protein is Glycine--tRNA ligase alpha subunit of Ligilactobacillus salivarius (strain UCC118) (Lactobacillus salivarius).